Consider the following 600-residue polypeptide: Proline--tRNA ligase (600 aa).

The protein belongs to the class-II aminoacyl-tRNA synthetase family. ProS type 1 subfamily. Homodimer.

It localises to the cytoplasm. The catalysed reaction is tRNA(Pro) + L-proline + ATP = L-prolyl-tRNA(Pro) + AMP + diphosphate. Functionally, catalyzes the attachment of proline to tRNA(Pro) in a two-step reaction: proline is first activated by ATP to form Pro-AMP and then transferred to the acceptor end of tRNA(Pro). As ProRS can inadvertently accommodate and process non-cognate amino acids such as alanine and cysteine, to avoid such errors it has two additional distinct editing activities against alanine. One activity is designated as 'pretransfer' editing and involves the tRNA(Pro)-independent hydrolysis of activated Ala-AMP. The other activity is designated 'posttransfer' editing and involves deacylation of mischarged Ala-tRNA(Pro). The misacylated Cys-tRNA(Pro) is not edited by ProRS. The protein is Proline--tRNA ligase of Synechococcus sp. (strain ATCC 27144 / PCC 6301 / SAUG 1402/1) (Anacystis nidulans).